The primary structure comprises 354 residues: E2F transcription factor-like E2FF (354 aa).

The DNA-binding element occupies 21–86; the sequence is RKEKSLGVLV…RGKNQYSWKG (66 aa). Positions 104-143 are disordered; it reads ERLGYSSSNNSDKVSNGCEREEPLTLTPDDQENSSSSKMD. Residues 108 to 117 are compositionally biased toward polar residues; it reads YSSSNNSDKV. A DNA-binding region spans residues 145-225; the sequence is KKEKSLWLLA…TRKPAYRWLG (81 aa).

The protein belongs to the E2F/DP family. High expression in young cotyledons and leaves, hypocotyls, shoot apical meristem, roots and mature pollen grains, moderate in developing trichomes, flowers and at early stages of developing anthers, and barely detectable in mature leaves. Not detected in primary root meristem, emerging lateral roots, pistils, developing embryos and siliques.

It localises to the nucleus. It is found in the cytoplasm. Its function is as follows. Inhibitor of E2F-dependent activation of gene expression. Binds specifically the E2 recognition site without interacting with DP proteins and prevents transcription activation by E2F/DP heterodimers. Does not bind retinoblastoma-related proteins. Acts as a growth regulator but is not associated with changes in the expression of cell cycle marker genes or in nuclear ploidy levels. Has no effect on cell proliferation, but may repress cell wall biosynthesis genes during cell elongation in differentiated cells. This Arabidopsis thaliana (Mouse-ear cress) protein is E2F transcription factor-like E2FF (E2FF).